Reading from the N-terminus, the 181-residue chain is Extracellular superoxide dismutase [Cu-Zn] (181 aa).

The N-terminal stretch at methionine 1–alanine 18 is a signal peptide. Asparagine 46 is a glycosylation site (N-linked (GlcNAc...) asparagine). Cu cation contacts are provided by histidine 75, histidine 77, and histidine 92. A disulfide bridge connects residues cysteine 86 and cysteine 175. Residues histidine 92, histidine 100, histidine 109, and aspartate 112 each coordinate Zn(2+). Asparagine 119 is a glycosylation site (N-linked (GlcNAc...) asparagine). Histidine 149 provides a ligand contact to Cu cation. The N-linked (GlcNAc...) asparagine glycan is linked to asparagine 159.

This sequence belongs to the Cu-Zn superoxide dismutase family. Cu cation serves as cofactor. The cofactor is Zn(2+). In terms of tissue distribution, expressed at higher levels in females compared to males.

The protein localises to the secreted. It carries out the reaction 2 superoxide + 2 H(+) = H2O2 + O2. Protects the extracellular space from the toxic effects of reactive oxygen intermediates by converting superoxide radicals into hydrogen peroxide and oxygen. This is Extracellular superoxide dismutase [Cu-Zn] from Drosophila melanogaster (Fruit fly).